A 156-amino-acid polypeptide reads, in one-letter code: Small ribosomal subunit protein uS7 (156 aa).

It belongs to the universal ribosomal protein uS7 family. As to quaternary structure, part of the 30S ribosomal subunit. Contacts proteins S9 and S11.

In terms of biological role, one of the primary rRNA binding proteins, it binds directly to 16S rRNA where it nucleates assembly of the head domain of the 30S subunit. Is located at the subunit interface close to the decoding center, probably blocks exit of the E-site tRNA. The polypeptide is Small ribosomal subunit protein uS7 (Onion yellows phytoplasma (strain OY-M)).